The sequence spans 112 residues: Putative pterin-4-alpha-carbinolamine dehydratase (112 aa).

This sequence belongs to the pterin-4-alpha-carbinolamine dehydratase family.

The catalysed reaction is (4aS,6R)-4a-hydroxy-L-erythro-5,6,7,8-tetrahydrobiopterin = (6R)-L-erythro-6,7-dihydrobiopterin + H2O. This is Putative pterin-4-alpha-carbinolamine dehydratase from Shewanella sp. (strain MR-4).